Here is a 312-residue protein sequence, read N- to C-terminus: DNA-directed RNA polymerase subunit alpha (312 aa).

The interval 1-226 (MIEFEKPNIT…EHLDIFVNLT (226 aa)) is alpha N-terminal domain (alpha-NTD). The segment at 243–312 (KEKMLEMTIE…DLGLGLRKED (70 aa)) is alpha C-terminal domain (alpha-CTD).

Belongs to the RNA polymerase alpha chain family. In terms of assembly, homodimer. The RNAP catalytic core consists of 2 alpha, 1 beta, 1 beta' and 1 omega subunit. When a sigma factor is associated with the core the holoenzyme is formed, which can initiate transcription.

The enzyme catalyses RNA(n) + a ribonucleoside 5'-triphosphate = RNA(n+1) + diphosphate. DNA-dependent RNA polymerase catalyzes the transcription of DNA into RNA using the four ribonucleoside triphosphates as substrates. The protein is DNA-directed RNA polymerase subunit alpha of Lacticaseibacillus casei (strain BL23) (Lactobacillus casei).